Here is a 36-residue protein sequence, read N- to C-terminus: Peroxiredoxin-4 (36 aa).

It belongs to the peroxiredoxin family. AhpC/Prx1 subfamily. As to quaternary structure, homodimer; disulfide-linked, upon oxidation. As to expression, venom gland.

It is found in the secreted. It carries out the reaction a hydroperoxide + [thioredoxin]-dithiol = an alcohol + [thioredoxin]-disulfide + H2O. Functionally, venom peroxiredoxin enzyme that may play a role as part of a redox pathway leading to the structural/functional diversification of toxins through a disulfide bond engineering mechanism. The chain is Peroxiredoxin-4 from Crotalus atrox (Western diamondback rattlesnake).